Here is an 89-residue protein sequence, read N- to C-terminus: Large ribosomal subunit protein bL27 (89 aa).

The interval 1–20 (MAHKKAGGSSRNGRDSIGRR) is disordered.

Belongs to the bacterial ribosomal protein bL27 family.

This Ruegeria pomeroyi (strain ATCC 700808 / DSM 15171 / DSS-3) (Silicibacter pomeroyi) protein is Large ribosomal subunit protein bL27.